The primary structure comprises 213 residues: Pyridoxine/pyridoxamine 5'-phosphate oxidase (213 aa).

Substrate contacts are provided by residues 8-11 and lysine 67; that span reads RREY. FMN-binding positions include 62–67, 77–78, arginine 83, lysine 84, and glutamine 106; these read RIVLLK and FT. 3 residues coordinate substrate: tyrosine 124, arginine 128, and serine 132. FMN is bound by residues 141–142 and tryptophan 186; that span reads QS. A substrate-binding site is contributed by 192-194; sequence RLH. FMN is bound at residue arginine 196.

Belongs to the pyridoxamine 5'-phosphate oxidase family. As to quaternary structure, homodimer. FMN serves as cofactor.

It carries out the reaction pyridoxamine 5'-phosphate + O2 + H2O = pyridoxal 5'-phosphate + H2O2 + NH4(+). It catalyses the reaction pyridoxine 5'-phosphate + O2 = pyridoxal 5'-phosphate + H2O2. Its pathway is cofactor metabolism; pyridoxal 5'-phosphate salvage; pyridoxal 5'-phosphate from pyridoxamine 5'-phosphate: step 1/1. The protein operates within cofactor metabolism; pyridoxal 5'-phosphate salvage; pyridoxal 5'-phosphate from pyridoxine 5'-phosphate: step 1/1. In terms of biological role, catalyzes the oxidation of either pyridoxine 5'-phosphate (PNP) or pyridoxamine 5'-phosphate (PMP) into pyridoxal 5'-phosphate (PLP). The chain is Pyridoxine/pyridoxamine 5'-phosphate oxidase from Shewanella woodyi (strain ATCC 51908 / MS32).